The sequence spans 156 residues: MIMMGKLKYKIQVNPEKTARAMGRNIPISRKHAREICKSINGMKLDEAIKFLEDVIAMRRPVLFRRHCKKVGHRKGKLGWPAGRYPVKAAKAILKILQHAKANAEYKGLNTEKLRIKHISTNKGITIKRYMPRAFGRATPKFQETVHIQVILEEYH.

This sequence belongs to the universal ribosomal protein uL22 family. As to quaternary structure, part of the 50S ribosomal subunit.

Functionally, this protein binds specifically to 23S rRNA. It makes multiple contacts with different domains of the 23S rRNA in the assembled 50S subunit and ribosome. The globular domain of the protein is located near the polypeptide exit tunnel on the outside of the subunit, while an extended beta-hairpin is found that lines the wall of the exit tunnel in the center of the 70S ribosome. The polypeptide is Large ribosomal subunit protein uL22 (Methanocaldococcus jannaschii (strain ATCC 43067 / DSM 2661 / JAL-1 / JCM 10045 / NBRC 100440) (Methanococcus jannaschii)).